Consider the following 335-residue polypeptide: Protein MET1, chloroplastic (335 aa).

Residues Met-1–Pro-18 show a composition bias toward low complexity. Disordered regions lie at residues Met-1–Leu-29 and Ser-66–Thr-88. The N-terminal 73 residues, Met-1–Lys-73, are a transit peptide targeting the chloroplast. The segment covering Arg-19–Leu-29 has biased composition (polar residues). Positions Gly-78–Thr-88 are enriched in acidic residues. The 40-residue stretch at Tyr-97–Ser-136 folds into the PDZ domain. 3 TPR repeats span residues Arg-217–Pro-250, Ser-254–Asp-287, and Lys-289–Ile-323.

As to quaternary structure, interacts directly with stromal loops of photosystem II (PSII) core components psbB (CP47) and psbC (CP43). Associates with PSII subcomplexes formed during the PSII repair cycle (e.g. PSII dimers, PSII monomers, CP43-less PSII monomerand PSII reaction centers). In terms of processing, phosphorylated rapidly (e.g. within 5 minutes) but transiently at threonine and serine residues after wounding. In terms of tissue distribution, expressed in leaves (at protein level). Mostly expressed in leaves, stems and siliques, and, to a lower extent, in flowers and senescent leaves, but not present in roots (at protein level).

The protein localises to the plastid. It is found in the chloroplast membrane. It localises to the chloroplast thylakoid membrane. Functionally, involved in photosystem II supercomplex formation and repair, probably acting as a psbB/psbC chaperone on the stromal side of the membrane. The polypeptide is Protein MET1, chloroplastic (Arabidopsis thaliana (Mouse-ear cress)).